A 333-amino-acid chain; its full sequence is Transaldolase (333 aa).

The active-site Schiff-base intermediate with substrate is Lys135.

Belongs to the transaldolase family. Type 1 subfamily. In terms of assembly, homodimer.

The protein localises to the cytoplasm. It carries out the reaction D-sedoheptulose 7-phosphate + D-glyceraldehyde 3-phosphate = D-erythrose 4-phosphate + beta-D-fructose 6-phosphate. It participates in carbohydrate degradation; pentose phosphate pathway; D-glyceraldehyde 3-phosphate and beta-D-fructose 6-phosphate from D-ribose 5-phosphate and D-xylulose 5-phosphate (non-oxidative stage): step 2/3. Its function is as follows. Transaldolase is important for the balance of metabolites in the pentose-phosphate pathway. The chain is Transaldolase from Prochlorococcus marinus (strain MIT 9301).